A 145-amino-acid chain; its full sequence is Prefoldin subunit alpha (145 aa).

The protein belongs to the prefoldin alpha subunit family. Heterohexamer of two alpha and four beta subunits.

It localises to the cytoplasm. Molecular chaperone capable of stabilizing a range of proteins. Seems to fulfill an ATP-independent, HSP70-like function in archaeal de novo protein folding. This is Prefoldin subunit alpha from Nitrosopumilus maritimus (strain SCM1).